The primary structure comprises 318 residues: ZAR1-like protein (318 aa).

The segment at 149–211 is disordered; the sequence is LSDPPEAGQP…PVDSSQPLGR (63 aa). Residues 155 to 169 show a composition bias toward pro residues; that stretch reads AGQPPPPLPPPSPPP. A 3CxxC-type zinc finger spans residues 219-304; that stretch reads PKYGYFHCKD…QELCGRCKDK (86 aa).

This sequence belongs to the ZAR1 family. In terms of assembly, interacts with YBX2.

The protein resides in the cytoplasm. Its subcellular location is the cytoplasmic ribonucleoprotein granule. Its function is as follows. mRNA-binding protein required for maternal mRNA storage, translation and degradation during oocyte maturation. Probably promotes formation of some phase-separated membraneless compartment that stores maternal mRNAs in oocytes: acts by undergoing liquid-liquid phase separation upon binding to maternal mRNAs. Binds to the 3'-UTR of maternal mRNAs, inhibiting their translation. This chain is ZAR1-like protein (ZAR1L), found in Bos taurus (Bovine).